A 526-amino-acid chain; its full sequence is Arp2/3 complex-activating protein rickA (526 aa).

The tract at residues threonine 305–alanine 356 is disordered. Positions threonine 318–threonine 352 are enriched in pro residues. 2 consecutive WH2 domains span residues aspartate 383 to valine 400 and serine 410 to valine 427. Disordered stretches follow at residues arginine 425 to asparagine 452 and methionine 464 to serine 526. The tract at residues valine 448–aspartate 484 is central and acidic domains. Residues methionine 464–glycine 480 are compositionally biased toward low complexity. 2 stretches are compositionally biased toward polar residues: residues asparagine 481–lysine 491 and threonine 506–serine 526.

As to quaternary structure, homodimer.

It localises to the cell surface. Functionally, recruits and activates the Arp2/3 complex, which in turn leads to actin polymerization, promoting Rickettsia motility during infection. The protein is Arp2/3 complex-activating protein rickA (rickA) of Rickettsia felis (strain ATCC VR-1525 / URRWXCal2) (Rickettsia azadi).